The chain runs to 479 residues: Sulfate adenylyltransferase subunit 1 (479 aa).

Residues 25–239 enclose the tr-type G domain; sequence KSLLRFLTCG…EVLETVDIQR (215 aa). The G1 stretch occupies residues 34–41; it reads GSVDDGKS. Residue 34 to 41 participates in GTP binding; the sequence is GSVDDGKS. The segment at 92–96 is G2; that stretch reads GITID. The segment at 113 to 116 is G3; the sequence is DTPG. GTP is bound by residues 113–117 and 168–171; these read DTPGH and NKMD. Residues 168-171 are G4; sequence NKMD. The interval 206-208 is G5; sequence SAL.

It belongs to the TRAFAC class translation factor GTPase superfamily. Classic translation factor GTPase family. CysN/NodQ subfamily. Heterodimer composed of CysD, the smaller subunit, and CysN.

It carries out the reaction sulfate + ATP + H(+) = adenosine 5'-phosphosulfate + diphosphate. It functions in the pathway sulfur metabolism; hydrogen sulfide biosynthesis; sulfite from sulfate: step 1/3. Functionally, with CysD forms the ATP sulfurylase (ATPS) that catalyzes the adenylation of sulfate producing adenosine 5'-phosphosulfate (APS) and diphosphate, the first enzymatic step in sulfur assimilation pathway. APS synthesis involves the formation of a high-energy phosphoric-sulfuric acid anhydride bond driven by GTP hydrolysis by CysN coupled to ATP hydrolysis by CysD. This is Sulfate adenylyltransferase subunit 1 from Salmonella paratyphi B (strain ATCC BAA-1250 / SPB7).